Here is a 183-residue protein sequence, read N- to C-terminus: MELELGLRLALPSPSPSPATATAAGSELDLLNSAPGSCRKRGFEEALGGFKTDDDNDDGNGRGGDGDSDGEMGNKRRKLVGWPPVKCLHRRRDGGCGGGYVKVKMEGLAIGRKLDLSILGSYAELLDTLHLMFPSTNQEDGHDRRRRHPYAVTYEDGEGDWMQVGDVPWEAFAKSVKRLKILV.

Disordered stretches follow at residues 1–23 (MELELGLRLALPSPSPSPATATA) and 42–77 (GFEEALGGFKTDDDNDDGNGRGGDGDSDGEMGNKRR). The short motif at 3 to 7 (LELGL) is the EAR-like (transcriptional repression) element. The PB1 domain maps to 98–183 (GGYVKVKMEG…KSVKRLKILV (86 aa)).

This sequence belongs to the Aux/IAA family. As to quaternary structure, homodimers and heterodimers. In terms of tissue distribution, expressed at very low levels in etiolated seedlings and flowers.

It is found in the nucleus. Functionally, aux/IAA proteins are short-lived transcriptional factors that function as repressors of early auxin response genes at low auxin concentrations. The chain is Auxin-responsive protein IAA20 (IAA20) from Oryza sativa subsp. japonica (Rice).